The sequence spans 657 residues: tRNA uridine 5-carboxymethylaminomethyl modification enzyme MnmG (657 aa).

13–18 (GGGHAG) is a binding site for FAD. 281–295 (GPRYCPSVEDKINRF) is an NAD(+) binding site.

This sequence belongs to the MnmG family. As to quaternary structure, homodimer. Heterotetramer of two MnmE and two MnmG subunits. FAD serves as cofactor.

The protein localises to the cytoplasm. NAD-binding protein involved in the addition of a carboxymethylaminomethyl (cmnm) group at the wobble position (U34) of certain tRNAs, forming tRNA-cmnm(5)s(2)U34. The polypeptide is tRNA uridine 5-carboxymethylaminomethyl modification enzyme MnmG (Acidovorax ebreus (strain TPSY) (Diaphorobacter sp. (strain TPSY))).